A 601-amino-acid chain; its full sequence is Sulfite reductase [NADPH] flavoprotein alpha-component (601 aa).

The Flavodoxin-like domain maps to 64-202; sequence ITLISASQTG…SAQQWRQQIV (139 aa). Residues 70 to 75, 117 to 120, and 153 to 162 each bind FMN; these read SQTGNA, STQG, and LGDTSYEHFC. The region spanning 236–450 is the FAD-binding FR-type domain; the sequence is AAPLTAQLSV…IEHNDNFRLP (215 aa). FAD is bound by residues Thr324, Lys358, 388-391, 406-408, Tyr412, and 421-424; these read RLYS, TVG, and GGAS. Residues 521 to 522, 527 to 531, and Asp563 contribute to the NADP(+) site; these read SR and KIYVQ. Tyr601 provides a ligand contact to FAD.

Belongs to the NADPH-dependent sulphite reductase flavoprotein subunit CysJ family. The protein in the N-terminal section; belongs to the flavodoxin family. This sequence in the C-terminal section; belongs to the flavoprotein pyridine nucleotide cytochrome reductase family. Alpha(8)-beta(8). The alpha component is a flavoprotein, the beta component is a hemoprotein. FAD serves as cofactor. FMN is required as a cofactor.

The enzyme catalyses hydrogen sulfide + 3 NADP(+) + 3 H2O = sulfite + 3 NADPH + 4 H(+). It participates in sulfur metabolism; hydrogen sulfide biosynthesis; hydrogen sulfide from sulfite (NADPH route): step 1/1. In terms of biological role, component of the sulfite reductase complex that catalyzes the 6-electron reduction of sulfite to sulfide. This is one of several activities required for the biosynthesis of L-cysteine from sulfate. The flavoprotein component catalyzes the electron flow from NADPH -&gt; FAD -&gt; FMN to the hemoprotein component. This chain is Sulfite reductase [NADPH] flavoprotein alpha-component, found in Yersinia enterocolitica serotype O:8 / biotype 1B (strain NCTC 13174 / 8081).